The sequence spans 647 residues: Versicolorin B synthase (647 aa).

The N-terminal stretch at methionine 1 to alanine 26 is a signal peptide. FAD is bound by residues threonine 85–alanine 86 and glutamate 106–alanine 107. Residue asparagine 117 is glycosylated (N-linked (GlcNAc...) asparagine). Glycine 172–leucine 175 provides a ligand contact to FAD. Asparagine 222 and asparagine 509 each carry an N-linked (GlcNAc...) asparagine glycan. FAD-binding positions include alanine 617 and proline 628 to methionine 629.

The protein belongs to the GMC oxidoreductase family. In terms of assembly, homodimer. FAD serves as cofactor.

It is found in the cytoplasm. The protein localises to the cytosol. It carries out the reaction (2S-3S)-versiconal hemiacetal = versicolorin B + H2O. The catalysed reaction is (S)-5'-oxoaverantin + H(+) = (1'S,5'S)-averufin + H2O. Its pathway is mycotoxin biosynthesis. In terms of biological role, versicolorin B synthase; part of the fragmented gene cluster that mediates the biosynthesis of dothistromin (DOTH), a polyketide toxin very similar in structure to the aflatoxin precursor, versicolorin B. The first step of the pathway is the conversion of acetate to norsolorinic acid (NOR) and requires the fatty acid synthase subunits hexA and hexB, as well as the polyketide synthase pksA. PksA combines a hexanoyl starter unit and 7 malonyl-CoA extender units to synthesize the precursor NOR. The hexanoyl starter unit is provided to the acyl-carrier protein (ACP) domain by the fungal fatty acid synthase hexA/hexB. The second step is the conversion of NOR to averantin (AVN) and requires the norsolorinic acid ketoreductase nor1, which catalyzes the dehydration of norsolorinic acid to form (1'S)-averantin. The cytochrome P450 monooxygenase avnA then catalyzes the hydroxylation of AVN to 5'hydroxyaverantin (HAVN). The next step is performed by adhA that transforms HAVN to averufin (AVF). Averufin might then be converted to hydroxyversicolorone by cypX and avfA. Hydroxyversicolorone is further converted versiconal hemiacetal acetate (VHA) by moxY. VHA is then the substrate for the versiconal hemiacetal acetate esterase est1 to yield versiconal (VAL). Versicolorin B synthase vbsA then converts VAL to versicolorin B (VERB) by closing the bisfuran ring. Then, the activity of the versicolorin B desaturase verB leads to versicolorin A (VERA). DotB, a predicted chloroperoxidase, may perform epoxidation of the A-ring of VERA. Alternatively, a cytochrome P450, such as cypX or avnA could catalyze this step. It is also possible that another, uncharacterized, cytochrome P450 enzyme is responsible for this step. Opening of the epoxide could potentially be achieved by the epoxide hydrolase epoA. However, epoA seems not to be required for DOTH biosynthesis, but other epoxide hydrolases may have the ability to complement this hydrolysis. Alternatively, opening of the epoxide ring could be achieved non-enzymatically. The next step is the deoxygenation of ring A to yield the 5,8-dihydroxyanthraquinone which is most likely catalyzed by the NADPH dehydrogenase encoded by ver1. The last stages of DOTH biosynthesis are proposed to involve hydroxylation of the bisfuran. OrdB and norB might have oxidative roles here. An alternative possibility is that cytochrome P450 monoogenases such as avnA and cypX might perform these steps in addition to previously proposed steps. The protein is Versicolorin B synthase of Dothistroma septosporum (Red band needle blight fungus).